Consider the following 59-residue polypeptide: UPF0181 protein YoaH (59 aa).

Belongs to the UPF0181 family.

In Escherichia coli O127:H6 (strain E2348/69 / EPEC), this protein is UPF0181 protein YoaH.